The sequence spans 280 residues: Undecaprenyl-diphosphatase (280 aa).

Helical transmembrane passes span 1–21, 45–65, 90–110, 115–135, 151–171, 226–246, and 260–280; these read MTLLQALILAIVQGITEPFPV, FLPFLTMLHVGTLVALAGVFW, IFGLLVIATIPAVLVGWLLEH, VFGTPLAVAGFLILNGFLLMV, IATLAPKDAVIIGIWQCLALL, IMVQCVAGAVVAGLTALICSL, and LTPFGVYCVLAGLFAGAVILL.

The protein belongs to the UppP family.

Its subcellular location is the cell inner membrane. The catalysed reaction is di-trans,octa-cis-undecaprenyl diphosphate + H2O = di-trans,octa-cis-undecaprenyl phosphate + phosphate + H(+). Catalyzes the dephosphorylation of undecaprenyl diphosphate (UPP). Confers resistance to bacitracin. The polypeptide is Undecaprenyl-diphosphatase (Gluconobacter oxydans (strain 621H) (Gluconobacter suboxydans)).